Consider the following 22-residue polypeptide: Putative lactoylglutathione lyase (22 aa).

The disordered stretch occupies residues 1-22 (ITACLDPDGWKEPGPLPGISTK). The Proton donor/acceptor role is filled by glutamate 12.

The protein belongs to the glyoxalase I family. Zn(2+) is required as a cofactor.

The enzyme catalyses (R)-S-lactoylglutathione = methylglyoxal + glutathione. Its pathway is secondary metabolite metabolism; methylglyoxal degradation; (R)-lactate from methylglyoxal: step 1/2. Functionally, catalyzes the conversion of hemimercaptal, formed from methylglyoxal and glutathione, to S-lactoylglutathione. This chain is Putative lactoylglutathione lyase, found in Pinus strobus (Eastern white pine).